The sequence spans 96 residues: ATP synthase subunit c (96 aa).

The next 2 helical transmembrane spans lie at 26-46 (GLVL…CGIG) and 68-88 (IMVT…YALV).

This sequence belongs to the ATPase C chain family. F-type ATPases have 2 components, F(1) - the catalytic core - and F(0) - the membrane proton channel. F(1) has five subunits: alpha(3), beta(3), gamma(1), delta(1), epsilon(1). F(0) has three main subunits: a(1), b(2) and c(10-14). The alpha and beta chains form an alternating ring which encloses part of the gamma chain. F(1) is attached to F(0) by a central stalk formed by the gamma and epsilon chains, while a peripheral stalk is formed by the delta and b chains.

The protein resides in the cell inner membrane. Its function is as follows. F(1)F(0) ATP synthase produces ATP from ADP in the presence of a proton or sodium gradient. F-type ATPases consist of two structural domains, F(1) containing the extramembraneous catalytic core and F(0) containing the membrane proton channel, linked together by a central stalk and a peripheral stalk. During catalysis, ATP synthesis in the catalytic domain of F(1) is coupled via a rotary mechanism of the central stalk subunits to proton translocation. Functionally, key component of the F(0) channel; it plays a direct role in translocation across the membrane. A homomeric c-ring of between 10-14 subunits forms the central stalk rotor element with the F(1) delta and epsilon subunits. The chain is ATP synthase subunit c from Oleidesulfovibrio alaskensis (strain ATCC BAA-1058 / DSM 17464 / G20) (Desulfovibrio alaskensis).